Consider the following 400-residue polypeptide: Carnosine N-methyltransferase (400 aa).

A disordered region spans residues 1-51; sequence MQRRQRAPPASQPAQDGGRSEDVEVQFSAGRLGSAAPAGPPARGTAEDEER. Over residues 28–44 the composition is skewed to low complexity; sequence SAGRLGSAAPAGPPARG. S-adenosyl-L-methionine contacts are provided by Gln-155, Arg-158, Gly-199, Glu-220, Asp-286, Phe-287, and Cys-303. Asp-307 contributes to the carnosine binding site. Tyr-315 is a binding site for S-adenosyl-L-methionine. Residues His-338 and Tyr-389 each contribute to the carnosine site.

This sequence belongs to the carnosine N-methyltransferase family. Homodimer. Each monomer accommodates one molecule of carnosine in its active pocket, precisely anchoring the histidine imidazole ring such that only N1 is exposed and deprotonated for methylation.

It localises to the cytoplasm. Its subcellular location is the cytosol. The protein localises to the nucleus. The enzyme catalyses carnosine + S-adenosyl-L-methionine = anserine + S-adenosyl-L-homocysteine + H(+). In terms of biological role, N-methyltransferase that catalyzes the formation of anserine (beta-alanyl-N(Pi)-methyl-L-histidine) from carnosine. Anserine, a methylated derivative of carnosine (beta-alanyl-L-histidine), is an abundant constituent of vertebrate skeletal muscles. Also methylates other L-histidine-containing di- and tripeptides such as Gly-Gly-His, Gly-His and homocarnosine (GABA-His). This chain is Carnosine N-methyltransferase, found in Mus musculus (Mouse).